Consider the following 212-residue polypeptide: Superoxide dismutase [Fe] 1, chloroplastic (212 aa).

N-acetylalanine is present on Ala-2. The Fe cation site is built by His-35, His-87, Asp-169, and His-173.

Belongs to the iron/manganese superoxide dismutase family. In terms of assembly, homodimer. Interacts with cpn20/cpn21. The cofactor is Fe cation.

It localises to the cell membrane. The protein resides in the plastid. Its subcellular location is the chloroplast membrane. It is found in the chloroplast stroma. The enzyme catalyses 2 superoxide + 2 H(+) = H2O2 + O2. With respect to regulation, activated by cpn20/cpn21. Destroys superoxide anion radicals which are normally produced within the cells and which are toxic to biological systems. The polypeptide is Superoxide dismutase [Fe] 1, chloroplastic (FSD1) (Arabidopsis thaliana (Mouse-ear cress)).